A 475-amino-acid polypeptide reads, in one-letter code: ATP synthase subunit beta (475 aa).

155-162 (GGAGVGKT) is a binding site for ATP.

It belongs to the ATPase alpha/beta chains family. In terms of assembly, F-type ATPases have 2 components, CF(1) - the catalytic core - and CF(0) - the membrane proton channel. CF(1) has five subunits: alpha(3), beta(3), gamma(1), delta(1), epsilon(1). CF(0) has three main subunits: a(1), b(2) and c(9-12). The alpha and beta chains form an alternating ring which encloses part of the gamma chain. CF(1) is attached to CF(0) by a central stalk formed by the gamma and epsilon chains, while a peripheral stalk is formed by the delta and b chains.

It is found in the cell inner membrane. It catalyses the reaction ATP + H2O + 4 H(+)(in) = ADP + phosphate + 5 H(+)(out). Produces ATP from ADP in the presence of a proton gradient across the membrane. The catalytic sites are hosted primarily by the beta subunits. The polypeptide is ATP synthase subunit beta (Rhizobium etli (strain CIAT 652)).